The sequence spans 44 residues: Defensin ARD1 (44 aa).

Intrachain disulfides connect cysteine 7/cysteine 32, cysteine 18/cysteine 40, and cysteine 22/cysteine 42.

It localises to the secreted. Its function is as follows. Possesses potent anti-fungal activity. The chain is Defensin ARD1 from Archaeoprepona demophon (One-spotted leafwing butterfly).